The sequence spans 33 residues: Dermaseptin DS VIII-like peptide (33 aa).

Position 33 is an alanine amide (Ala33).

In terms of tissue distribution, expressed by the parotoid glands.

The protein resides in the secreted. In terms of biological role, possesses a potent antimicrobial activity against bacteria, fungi and protozoa. Probably acts by disturbing membrane functions with its amphipathic structure. The sequence is that of Dermaseptin DS VIII-like peptide from Phyllomedusa burmeisteri (Brazilian common walking leaf frog).